A 478-amino-acid chain; its full sequence is Hepatitis A virus cellular receptor 1 (478 aa).

Residues 1 to 24 (MADPIMHLQVVILSLILHLADSVA) form the signal peptide. Residues 25–126 (DSVNVDGVAG…WFNDMKITIS (102 aa)) enclose the Ig-like V-type domain. The Extracellular segment spans residues 25-397 (DSVNVDGVAG…SPQMVNTTEG (373 aa)). 3 disulfides stabilise this stretch: cysteine 41-cysteine 110, cysteine 51-cysteine 62, and cysteine 57-cysteine 109. N-linked (GlcNAc...) asparagine glycosylation is found at asparagine 70 and asparagine 87. 28 consecutive repeat copies span residues 148–155 (VPTTTTTT), 156–161 (LPTTTT), 162–167 (LPTTTT), 168–173 (LPTTMT), 174–179 (LPTTTT), 180–185 (LPMTTT), 186–191 (LPTTTT), 192–197 (VPMTTT), 198–201 (LPTT), 202–207 (LPTTTT), 208–211 (LPTT), 212–217 (LPTTTT), 218–221 (LPTT), 222–227 (LPTTTT), 228–233 (LPTTMT), 234–239 (LPMTTT), 240–245 (LPTTTT), 246–251 (LPTTTT), 252–257 (LPTTTT), 258–263 (LPTTTT), 264–268 (LPTTT), 269–273 (LPTMT), 274–279 (LPTTTT), 280–285 (LPTTMT), 286–291 (LPMTTT), 292–297 (LPTTTT), 298–303 (LPTTTT), and 304–309 (LPTTTM). Residues 148-309 (VPTTTTTTLP…TTTTLPTTTM (162 aa)) are 28 X 6 AA approximate tandem repeats of L-P-[MT]-T-[MT]-T. The disordered stretch occupies residues 187 to 303 (PTTTTVPMTT…TTTTLPTTTT (117 aa)). Disordered regions lie at residues 320-339 (PMQDHEPVATSPSSAQPAET) and 344-370 (LLGATRTQPTSSPLYSYTTDGSDTVTE). The segment covering 348-370 (TRTQPTSSPLYSYTTDGSDTVTE) has biased composition (polar residues). Residues asparagine 379 and asparagine 393 are each glycosylated (N-linked (GlcNAc...) asparagine). The chain crosses the membrane as a helical span at residues 398-418 (IYAGVCISVLVLLAVLGVVIA). The Cytoplasmic portion of the chain corresponds to 419–478 (KKYFFKKEIQQLSVSFSNHQFKTLQNAVKKEVHAEDNIYIENNLYAMNQDPVVLFESLRP).

Belongs to the immunoglobulin superfamily. TIM family. As to quaternary structure, interacts with STAM. Interacts with SELPLG.

The protein resides in the cell membrane. Functionally, phosphatidylserine receptor that plays an important functional role in regulatory B-cells homeostasis including generation, expansion and suppressor functions. As P-selectin/SELPLG ligand, plays a specialized role in activated but not naive T-cell trafficking during inflammatory responses. Controls thereby T-cell accumulation in the inflamed central nervous system (CNS) and the induction of autoimmune disease. Also regulates expression of various anti-inflammatory cytokines and co-inhibitory ligands including IL10. Acts as a regulator of T-cell proliferation. May play a role in kidney injury and repair. In Chlorocebus aethiops (Green monkey), this protein is Hepatitis A virus cellular receptor 1 (HAVCR1).